The following is a 666-amino-acid chain: Protein translocase subunit SecA 2 (666 aa).

Residues Gln119, 137 to 141 (GEGKS), and Asp546 contribute to the ATP site.

It belongs to the SecA family. Monomer and homodimer. Part of the essential Sec protein translocation apparatus which comprises SecA, SecYEG and auxiliary proteins SecDF-YajC and YidC.

The protein resides in the cell inner membrane. Its subcellular location is the cytoplasm. It catalyses the reaction ATP + H2O + cellular proteinSide 1 = ADP + phosphate + cellular proteinSide 2.. Functionally, part of the Sec protein translocase complex. Interacts with the SecYEG preprotein conducting channel. Has a central role in coupling the hydrolysis of ATP to the transfer of proteins into and across the cell membrane, serving both as a receptor for the preprotein-SecB complex and as an ATP-driven molecular motor driving the stepwise translocation of polypeptide chains across the membrane. This Nitrosospira multiformis (strain ATCC 25196 / NCIMB 11849 / C 71) protein is Protein translocase subunit SecA 2.